We begin with the raw amino-acid sequence, 88 residues long: Small ribosomal subunit protein uS15 (88 aa).

Belongs to the universal ribosomal protein uS15 family. In terms of assembly, part of the 30S ribosomal subunit. Forms a bridge to the 50S subunit in the 70S ribosome, contacting the 23S rRNA.

In terms of biological role, one of the primary rRNA binding proteins, it binds directly to 16S rRNA where it helps nucleate assembly of the platform of the 30S subunit by binding and bridging several RNA helices of the 16S rRNA. Forms an intersubunit bridge (bridge B4) with the 23S rRNA of the 50S subunit in the ribosome. The polypeptide is Small ribosomal subunit protein uS15 (Flavobacterium johnsoniae (strain ATCC 17061 / DSM 2064 / JCM 8514 / BCRC 14874 / CCUG 350202 / NBRC 14942 / NCIMB 11054 / UW101) (Cytophaga johnsonae)).